Here is a 188-residue protein sequence, read N- to C-terminus: Probable nicotinate-nucleotide adenylyltransferase (188 aa).

This sequence belongs to the NadD family.

It carries out the reaction nicotinate beta-D-ribonucleotide + ATP + H(+) = deamido-NAD(+) + diphosphate. Its pathway is cofactor biosynthesis; NAD(+) biosynthesis; deamido-NAD(+) from nicotinate D-ribonucleotide: step 1/1. Catalyzes the reversible adenylation of nicotinate mononucleotide (NaMN) to nicotinic acid adenine dinucleotide (NaAD). The sequence is that of Probable nicotinate-nucleotide adenylyltransferase from Sulfurovum sp. (strain NBC37-1).